Consider the following 114-residue polypeptide: As-peptide 126 (114 aa).

Residues M1 to A22 form the signal peptide. Tandem repeats lie at residues A22–E29, A30–E37, A38–E45, P46–E53, P54–E61, P62–D69, P70–E77, P78–E85, and P86–E93. The interval A22–E93 is 9 X 8 AA approximate tandem repeats of [AP]-[ILS]-[AP]-A-A-N-A-[DE]. A propeptide spanning residues S23–A104 is cleaved from the precursor. Residues A82–A96 are compositionally biased toward low complexity. The segment at A82 to G114 is disordered. Q105 is subject to Pyrrolidone carboxylic acid. K113 carries the lysine amide modification.

In terms of tissue distribution, expressed by the venom gland.

It localises to the secreted. This chain is As-peptide 126, found in Anoplius samariensis (Solitary wasp).